The chain runs to 237 residues: 1-(5-phosphoribosyl)-5-[(5-phosphoribosylamino)methylideneamino] imidazole-4-carboxamide isomerase (237 aa).

The active-site Proton acceptor is aspartate 8. Aspartate 130 (proton donor) is an active-site residue.

This sequence belongs to the HisA/HisF family.

The protein localises to the cytoplasm. The catalysed reaction is 1-(5-phospho-beta-D-ribosyl)-5-[(5-phospho-beta-D-ribosylamino)methylideneamino]imidazole-4-carboxamide = 5-[(5-phospho-1-deoxy-D-ribulos-1-ylimino)methylamino]-1-(5-phospho-beta-D-ribosyl)imidazole-4-carboxamide. The protein operates within amino-acid biosynthesis; L-histidine biosynthesis; L-histidine from 5-phospho-alpha-D-ribose 1-diphosphate: step 4/9. The protein is 1-(5-phosphoribosyl)-5-[(5-phosphoribosylamino)methylideneamino] imidazole-4-carboxamide isomerase of Halothermothrix orenii (strain H 168 / OCM 544 / DSM 9562).